Here is a 128-residue protein sequence, read N- to C-terminus: MCCNYYGNSCGGCGYGSRYGYGCGYGSGYGCGYGSGYGCGYGSGYGCGYGSGYGCGYGSGYGCGYGSGYGCGYGSGYGCGYGSGYGCGYGSGYGCGYGSGYGCGYGSRYGCGYGSGCCSYRKCYSSCC.

The interval 11-117 is 51 X 2 AA repeats of G-[YCGS]; it reads GGCGYGSRYG…RYGCGYGSGC (107 aa).

This sequence belongs to the KRTAP type 21 family. In terms of assembly, interacts with hair keratins. As to expression, strong expression in narrowly defined pattern restricted to the lower and middle cortical regions of the hair shaft in both developing and cycling hair. During hair follicle regression (catagen), expression levels decrease until expression is no longer detectable in follicles at resting stage (telogen).

In the hair cortex, hair keratin intermediate filaments are embedded in an interfilamentous matrix, consisting of hair keratin-associated proteins (KRTAP), which are essential for the formation of a rigid and resistant hair shaft through their extensive disulfide bond cross-linking with abundant cysteine residues of hair keratins. The matrix proteins include the high-sulfur and high-glycine-tyrosine keratins. This is Keratin-associated protein 21-1 (Krtap21-1) from Mus musculus (Mouse).